The sequence spans 785 residues: MTSDWDEIKRLASDFQKAQLTTSLQRLSERNCVEVVSLLIEKGLLEVIYTTDGKEYLTQVHLKQEVRDEMFVRGGRVNLVDLSKALTVDFEKVQVVAEQIVVEDRSVKFILGQLIEQFYMERVASEINEKLAQVGEINVADLTVQYDLPADFILNNIILRHLNKTIMGKQDSSNANIFFTQSYVARSKAKVRGALAAITKPTPVSAILAQCGIPDRLFNLLVNEVATLGSVTSRTPGALYIPHIYTKTQVEWVQNFYRQNGYLEHDSVAGLGVTDVKNFIVNQLPNEKIVHLKKCSVGEKLIEQVASSLEECISTSTYLDVSTVLPSIMSDEDVDQLLTIVLTAPMQKQVLIFNSTILTTKFVEDMIKPCYDIAVENAKKSVDSGTYQQYMAEKMMKHQDVIPDKESAENKADKRDERRKKAAGGKAGGGAQGRETKTKSTKKHARGHRGNVSDSDEDFGPAEKSAGGKKGAKEASIELITVKDISKVLHGGLEEEGLEDLAKQLAQHYYPQFSRLALAKAHELYEISLHQNNQNRRQTHANLQDKLNNLFNDIRLYEKGIKLLPADVQPQLVKYLLKSLGTDFCNEIFFYVAAECNLNSNGTTLTVEQRNKIAADCGQEYRGALQALNKATASSAAVDDFLVVAENSLQACSMILKKIDKKKDRNLILCHKHGLLEQLANCSDPALVLHLAVLILFTISTQSMLHASGRHVSAILSFLQPALAPEQAQTLTTYHDLVLKLLSVENASDDSKADADEVKQQLEKLTPTVKDIAGNYKKAGLTSAE.

Residues 396 to 416 (MKHQDVIPDKESAENKADKRD) are compositionally biased toward basic and acidic residues. The segment at 396 to 473 (MKHQDVIPDK…KSAGGKKGAK (78 aa)) is disordered. Positions 439–449 (KSTKKHARGHR) are enriched in basic residues.

Belongs to the UFL1 family.

E3 UFM1-protein ligase that mediates ufmylation of target proteins. The chain is E3 UFM1-protein ligase 1 homolog from Culex quinquefasciatus (Southern house mosquito).